The chain runs to 484 residues: MLVARTCQLYPNAIASTLVHKFFLVFSKWEWPNPVLLKQPEECNLNLPVWDPRVNPSDRYHLMPIITPAYPQQNSTYNVSVSTRAVMVEEFKQGLAITDEILLVKAEWSKLFDAPNFFQKYKHYILLLASAPTEKQRLEWVGLVESKIRILVGSLEKNEFITLAHVNPQSFPSPSENSEKEEFRTMWVIGLVFKKMENSENLSVDLTYDIQSFTDTVYRQAINSKMFETEIKIAAMHVKRKQLHQLLPSHVLPKKKKHSVEGVKLVSLNDSSIDLSVDSDNSMSVPSPTNATRTSPLNSTGLSQGNSPATPVSLSVTNTQATDVMVPQNNSTENSGGSLNESIPETATHPAFSSTPRPLVTRVVSSMPLVNQVQKPVTNTVTKMPSPVAGVKRTSSPTNEESPKKTKTEEDENDSSNSTEVDEQNKLEPEELKEVHSEEKSSSPVPGALPSSQRSSSTDLSDISVLPATPIPVIKNSIKLRLNR.

Positions 240–257 (RKQLHQLLPSHVLPKKKK) match the Nuclear localization signal 1 motif. Disordered regions lie at residues 276–314 (SVDSDNSMSVPSPTNATRTSPLNSTGLSQGNSPATPVSL), 326–356 (VPQNNSTENSGGSLNESIPETATHPAFSSTP), and 375–484 (KPVT…RLNR). A Nuclear localization signal 2 motif is present at residues 392–407 (KRTSSPTNEESPKKTK). A compositionally biased stretch (basic and acidic residues) spans 423–441 (EQNKLEPEELKEVHSEEKS). Over residues 451-464 (SSQRSSSTDLSDIS) the composition is skewed to low complexity.

This sequence belongs to the poly(A) polymerase family. In terms of assembly, monomer.

Its subcellular location is the nucleus. The enzyme catalyses RNA(n) + ATP = RNA(n)-3'-adenine ribonucleotide + diphosphate. In terms of biological role, polymerase that creates the 3'-poly(A) tail of mRNA's. May acquire specificity through interaction with a cleavage and polyadenylation factor (CPSF). The sequence is that of Poly(A) polymerase alpha-B (papola-b) from Xenopus laevis (African clawed frog).